Here is a 491-residue protein sequence, read N- to C-terminus: Ketol-acid reductoisomerase (NADP(+)) (491 aa).

Residues 15 to 208 enclose the KARI N-terminal Rossmann domain; it reads AQLGKCRFMA…GGHRAGVLES (194 aa). NADP(+) contacts are provided by residues 45-48, Arg68, Arg76, Ser78, and 108-110; these read CGAQ and DKQ. His132 is a catalytic residue. Position 158 (Gly158) interacts with NADP(+). 2 KARI C-terminal knotted domains span residues 209-344 and 345-484; these read SFVA…NAPQ and FEGK…MTDM. Asp217, Glu221, Glu389, and Glu393 together coordinate Mg(2+). Ser414 provides a ligand contact to substrate.

The protein belongs to the ketol-acid reductoisomerase family. Requires Mg(2+) as cofactor.

It catalyses the reaction (2R)-2,3-dihydroxy-3-methylbutanoate + NADP(+) = (2S)-2-acetolactate + NADPH + H(+). The catalysed reaction is (2R,3R)-2,3-dihydroxy-3-methylpentanoate + NADP(+) = (S)-2-ethyl-2-hydroxy-3-oxobutanoate + NADPH + H(+). It functions in the pathway amino-acid biosynthesis; L-isoleucine biosynthesis; L-isoleucine from 2-oxobutanoate: step 2/4. It participates in amino-acid biosynthesis; L-valine biosynthesis; L-valine from pyruvate: step 2/4. Functionally, involved in the biosynthesis of branched-chain amino acids (BCAA). Catalyzes an alkyl-migration followed by a ketol-acid reduction of (S)-2-acetolactate (S2AL) to yield (R)-2,3-dihydroxy-isovalerate. In the isomerase reaction, S2AL is rearranged via a Mg-dependent methyl migration to produce 3-hydroxy-3-methyl-2-ketobutyrate (HMKB). In the reductase reaction, this 2-ketoacid undergoes a metal-dependent reduction by NADPH to yield (R)-2,3-dihydroxy-isovalerate. The chain is Ketol-acid reductoisomerase (NADP(+)) from Serratia proteamaculans (strain 568).